A 249-amino-acid chain; its full sequence is Metallo-beta-lactamase type 2 (249 aa).

The N-terminal stretch at 1-22 (MLKKIKISLILALGLTSLQAFG) is a signal peptide. His98, His100, Asp102, His161, and Cys180 together coordinate Zn(2+). Lys183 is a substrate binding site. His222 is a binding site for Zn(2+).

Belongs to the metallo-beta-lactamase superfamily. Class-B beta-lactamase family. In terms of assembly, monomer. The cofactor is Zn(2+).

Its subcellular location is the periplasm. It catalyses the reaction a beta-lactam + H2O = a substituted beta-amino acid. Confers resistance to the different beta-lactams antibiotics (penicillin, cephalosporin and carbapenem) via the hydrolysis of the beta-lactam ring. This Elizabethkingia meningoseptica (Chryseobacterium meningosepticum) protein is Metallo-beta-lactamase type 2 (blaB2).